We begin with the raw amino-acid sequence, 337 residues long: Ornithine carbamoyltransferase, catabolic (337 aa).

Carbamoyl phosphate contacts are provided by residues 57-60 (STRT), Q84, R108, and 135-138 (HPTQ). Residues N167, D231, and 235 to 236 (SM) contribute to the L-ornithine site. Carbamoyl phosphate contacts are provided by residues 272–273 (CL) and R317.

This sequence belongs to the aspartate/ornithine carbamoyltransferase superfamily. OTCase family.

It is found in the cytoplasm. The catalysed reaction is carbamoyl phosphate + L-ornithine = L-citrulline + phosphate + H(+). Its pathway is amino-acid degradation; L-arginine degradation via ADI pathway; carbamoyl phosphate from L-arginine: step 2/2. Reversibly catalyzes the transfer of the carbamoyl group from carbamoyl phosphate (CP) to the N(epsilon) atom of ornithine (ORN) to produce L-citrulline. This Streptococcus ratti protein is Ornithine carbamoyltransferase, catabolic.